The sequence spans 664 residues: Cyclic nucleotide-gated channel alpha-2 (664 aa).

Residues 1 to 20 (MTEKSNGVKSSPANNHNNHV) are compositionally biased toward polar residues. The interval 1 to 49 (MTEKSNGVKSSPANNHNNHVPATIKANGKDESRTRSRPQSAADDDTSSE) is disordered. At 1–144 (MTEKSNGVKS…PAGDWYYRWL (144 aa)) the chain is on the cytoplasmic side. Residues 145-166 (FVIAMPVLYNWCLLVARACFSD) form a helical membrane-spanning segment. Residues 167–176 (LQRGYFLVWL) lie on the Extracellular side of the membrane. A helical membrane pass occupies residues 177–197 (VLDYFSDVVYIADLFIRLRTG). Topologically, residues 198-222 (FLEQGLLVKDPKKLRDNYIHTLQFK) are cytoplasmic. The helical transmembrane segment at 223-241 (LDVASIIPTDLIYFAVGIH) threads the bilayer. Residues 242-246 (NPELR) lie on the Extracellular side of the membrane. A helical membrane pass occupies residues 247 to 265 (FNRLLHFARMFEFFDRTET). The Cytoplasmic segment spans residues 266 to 272 (RTSYPNI). The tract at residues 270–378 (PNIFRISNLV…GNVGSMISNM (109 aa)) is ion conduction pathway. The chain crosses the membrane as a helical span at residues 273-296 (FRISNLVLYILVIIHWNACIYYAI). Residues 297–319 (SKSIGFGVDTWVYPNITDPEYGY) lie on the Extracellular side of the membrane. Transmembrane regions (helical) follow at residues 320–354 (LARE…LFVI) and 355–379 (FDFL…SNMN). The segment at 337-340 (TIGE) is selectivity filter. The interval 380 to 456 (ATRAEFQAKI…STLKKVRIFQ (77 aa)) is C-linker. Residues 380–664 (ATRAEFQAKI…SPEPAAAEQP (285 aa)) lie on the Cytoplasmic side of the membrane. The interval 460–580 (AGLLVELVLK…EERGREILMK (121 aa)) is cyclic nucleotide-binding domain. Gly-520, Ser-523, Arg-536, and Thr-537 together coordinate 3',5'-cyclic GMP. 3',5'-cyclic AMP is bound by residues Arg-536 and Thr-537. The stretch at 597–651 (VQEKLKQLETNMETLYTRFGRLLAEYTGAQQKLKQRITVLEVKMKQNTEDDYLSD) forms a coiled coil. A disordered region spans residues 644 to 664 (TEDDYLSDGMNSPEPAAAEQP).

Belongs to the cyclic nucleotide-gated cation channel (TC 1.A.1.5) family. CNGA2 subfamily. In terms of assembly, the olfactory cyclic nucleotide-gated channel is an heterotetramer composed of CNGA2, CNGA4 and CNGB1b subunits with 2:1:1 stoichiometry.

It localises to the cell projection. The protein localises to the cilium membrane. The catalysed reaction is Ca(2+)(in) = Ca(2+)(out). The enzyme catalyses Na(+)(in) = Na(+)(out). It catalyses the reaction K(+)(in) = K(+)(out). It carries out the reaction NH4(+)(in) = NH4(+)(out). The catalysed reaction is Rb(+)(in) = Rb(+)(out). The enzyme catalyses Li(+)(in) = Li(+)(out). It catalyses the reaction Cs(+)(in) = Cs(+)(out). Its function is as follows. Pore-forming subunit of the olfactory cyclic nucleotide-gated channel. Operates in the cilia of olfactory sensory neurons where chemical stimulation of the odorant is converted to an electrical signal. Mediates odorant-induced cAMP-dependent Ca(2+) influx triggering neuron depolarization. The rise of intracellular Ca(2+) levels potentiates the olfactory response by activating Ca(2+)-dependent Cl(-) channels, but it also serves as a negative feedback signal to desensitize the channel for rapid adaptation to odorants. Conducts cAMP- and cGMP-gated ion currents, with permeability for monovalent and divalent cations. The sequence is that of Cyclic nucleotide-gated channel alpha-2 from Oryctolagus cuniculus (Rabbit).